The sequence spans 366 residues: tRNA-specific 2-thiouridylase MnmA (366 aa).

Residues 6–13 (GLSGGVDS) and M32 each bind ATP. Catalysis depends on C96, which acts as the Nucleophile. C96 and C196 are disulfide-bonded. G120 is a binding site for ATP. The interval 146 to 148 (KDQ) is interaction with tRNA. The Cysteine persulfide intermediate role is filled by C196. Residues 302 to 303 (RY) are interaction with tRNA.

It belongs to the MnmA/TRMU family.

The protein localises to the cytoplasm. The enzyme catalyses S-sulfanyl-L-cysteinyl-[protein] + uridine(34) in tRNA + AH2 + ATP = 2-thiouridine(34) in tRNA + L-cysteinyl-[protein] + A + AMP + diphosphate + H(+). Catalyzes the 2-thiolation of uridine at the wobble position (U34) of tRNA, leading to the formation of s(2)U34. The sequence is that of tRNA-specific 2-thiouridylase MnmA from Treponema denticola (strain ATCC 35405 / DSM 14222 / CIP 103919 / JCM 8153 / KCTC 15104).